Consider the following 391-residue polypeptide: Carbamoyl phosphate synthase small chain (391 aa).

Residues 1–199 (MVRISGFCCA…TWEFIEGPTT (199 aa)) form a CPSase region. The L-glutamine site is built by serine 61, glycine 251, and glycine 253. In terms of domain architecture, Glutamine amidotransferase type-1 spans 203 to 388 (TVVAIDFGVK…VALMRDRQPT (186 aa)). Residue cysteine 279 is the Nucleophile of the active site. Leucine 280, glutamine 283, asparagine 319, glycine 321, and phenylalanine 322 together coordinate L-glutamine. Active-site residues include histidine 361 and glutamate 363.

It belongs to the CarA family. In terms of assembly, composed of two chains; the small (or glutamine) chain promotes the hydrolysis of glutamine to ammonia, which is used by the large (or ammonia) chain to synthesize carbamoyl phosphate. Tetramer of heterodimers (alpha,beta)4.

The enzyme catalyses hydrogencarbonate + L-glutamine + 2 ATP + H2O = carbamoyl phosphate + L-glutamate + 2 ADP + phosphate + 2 H(+). The catalysed reaction is L-glutamine + H2O = L-glutamate + NH4(+). Its pathway is amino-acid biosynthesis; L-arginine biosynthesis; carbamoyl phosphate from bicarbonate: step 1/1. It participates in pyrimidine metabolism; UMP biosynthesis via de novo pathway; (S)-dihydroorotate from bicarbonate: step 1/3. Its function is as follows. Small subunit of the glutamine-dependent carbamoyl phosphate synthetase (CPSase). CPSase catalyzes the formation of carbamoyl phosphate from the ammonia moiety of glutamine, carbonate, and phosphate donated by ATP, constituting the first step of 2 biosynthetic pathways, one leading to arginine and/or urea and the other to pyrimidine nucleotides. The small subunit (glutamine amidotransferase) binds and cleaves glutamine to supply the large subunit with the substrate ammonia. This chain is Carbamoyl phosphate synthase small chain, found in Synechococcus sp. (strain ATCC 27144 / PCC 6301 / SAUG 1402/1) (Anacystis nidulans).